The following is a 171-amino-acid chain: Adenine phosphoribosyltransferase (171 aa).

Belongs to the purine/pyrimidine phosphoribosyltransferase family. Homodimer.

It is found in the cytoplasm. The enzyme catalyses AMP + diphosphate = 5-phospho-alpha-D-ribose 1-diphosphate + adenine. The protein operates within purine metabolism; AMP biosynthesis via salvage pathway; AMP from adenine: step 1/1. In terms of biological role, catalyzes a salvage reaction resulting in the formation of AMP, that is energically less costly than de novo synthesis. The protein is Adenine phosphoribosyltransferase of Geobacter metallireducens (strain ATCC 53774 / DSM 7210 / GS-15).